A 41-amino-acid chain; its full sequence is Photosystem I reaction center subunit IX (41 aa).

A helical transmembrane segment spans residues 7-27; it reads YLSTAPVVAFAWLTFTAGFII.

The protein belongs to the PsaJ family.

It is found in the plastid. The protein resides in the chloroplast thylakoid membrane. Functionally, may help in the organization of the PsaE and PsaF subunits. The protein is Photosystem I reaction center subunit IX of Stigeoclonium helveticum (Green alga).